Consider the following 542-residue polypeptide: Membrane protein insertase YidC (542 aa).

5 helical membrane-spanning segments follow: residues 7–27 (LLVMGLLLVSFLIFTQWQQDF), 338–358 (FALLTFIQSIVTNWGLAIIGV), 417–437 (MGGCLPILIQMPIFIALYWTF), 455–475 (LSAQDPYYILPLLMGASMFLL), and 494–514 (FMPVMFTVFFLWFPSGLVLYW).

The protein belongs to the OXA1/ALB3/YidC family. Type 1 subfamily. Interacts with the Sec translocase complex via SecD. Specifically interacts with transmembrane segments of nascent integral membrane proteins during membrane integration.

It localises to the cell inner membrane. Its function is as follows. Required for the insertion and/or proper folding and/or complex formation of integral membrane proteins into the membrane. Involved in integration of membrane proteins that insert both dependently and independently of the Sec translocase complex, as well as at least some lipoproteins. Aids folding of multispanning membrane proteins. The sequence is that of Membrane protein insertase YidC from Actinobacillus pleuropneumoniae serotype 3 (strain JL03).